Here is a 126-residue protein sequence, read N- to C-terminus: Protein ApaG (126 aa).

Positions 2-126 (SALDDSIRVE…FRLALPGLLH (125 aa)) constitute an ApaG domain.

This Shewanella sp. (strain MR-7) protein is Protein ApaG.